A 336-amino-acid polypeptide reads, in one-letter code: Ornithine carbamoyltransferase, catabolic (336 aa).

Carbamoyl phosphate is bound by residues 57 to 60 (STRT), glutamine 84, arginine 108, and 135 to 138 (HPTQ). L-ornithine contacts are provided by residues asparagine 168, aspartate 232, and 236-237 (SM). Residues 274–275 (CL) and arginine 321 each bind carbamoyl phosphate.

The protein belongs to the aspartate/ornithine carbamoyltransferase superfamily. OTCase family.

It is found in the cytoplasm. The enzyme catalyses carbamoyl phosphate + L-ornithine = L-citrulline + phosphate + H(+). Its pathway is amino-acid degradation; L-arginine degradation via ADI pathway; carbamoyl phosphate from L-arginine: step 2/2. Reversibly catalyzes the transfer of the carbamoyl group from carbamoyl phosphate (CP) to the N(epsilon) atom of ornithine (ORN) to produce L-citrulline. The chain is Ornithine carbamoyltransferase, catabolic (arcB) from Pseudomonas putida (strain ATCC 47054 / DSM 6125 / CFBP 8728 / NCIMB 11950 / KT2440).